Reading from the N-terminus, the 997-residue chain is Protein Smaug (997 aa).

The span at 1–37 (MKYATGTDNAMTSGISGQTNNSNSASTEMQPTTSTPT) shows a compositional bias: polar residues. 2 disordered regions span residues 1–69 (MKYA…QSQP) and 329–370 (LCPA…GSSS). Composition is skewed to low complexity over residues 44–69 (TPTA…QSQP) and 329–338 (LCPASGSRSS). Serine 564 and serine 575 each carry phosphoserine. The segment at 583–763 (EFKPNYIKFH…KDLKFKLSKM (181 aa)) is interaction with cup. Residues 600–654 (GIGLWLKSLRLHKYIELFKNMTYEEMLLITEDFLQSVGVTKGASHKLALCIEKLK) enclose the SAM domain. Disordered regions lie at residues 773 to 892 (HVKP…MQQM) and 944 to 972 (GSSD…TSAE). Composition is skewed to polar residues over residues 802–822 (NGSN…NFSL) and 854–864 (HQPQYKSSSYP). The residue at position 970 (serine 970) is a Phosphoserine.

It belongs to the SMAUG family. Interacts with oskar (osk). Binds to the 3'-UTR of nos. Interacts with cup, which in turn recruits eIF4-E, leading to an indirect interaction between smg and eIF4-E that prevents mRNA translation.

The protein localises to the cytoplasm. Translation regulator that binds to the 3'-UTR of specific mRNAs such as nanos (nos) and prevent their translation. Prevents translation of unlocalized nos in the bulk cytoplasm via the recruitment of cup. In Drosophila erecta (Fruit fly), this protein is Protein Smaug.